A 291-amino-acid polypeptide reads, in one-letter code: Methionine aminopeptidase (291 aa).

His65 provides a ligand contact to substrate. 3 residues coordinate a divalent metal cation: Asp85, Asp96, and His155. Position 163 (His163) interacts with substrate. Glu188 and Glu276 together coordinate a divalent metal cation.

It belongs to the peptidase M24A family. Methionine aminopeptidase archaeal type 2 subfamily. In terms of assembly, monomer. It depends on Co(2+) as a cofactor. Requires Zn(2+) as cofactor. Mn(2+) is required as a cofactor. Fe(2+) serves as cofactor.

The catalysed reaction is Release of N-terminal amino acids, preferentially methionine, from peptides and arylamides.. Its function is as follows. Removes the N-terminal methionine from nascent proteins. The N-terminal methionine is often cleaved when the second residue in the primary sequence is small and uncharged (Met-Ala-, Cys, Gly, Pro, Ser, Thr, or Val). This Archaeoglobus fulgidus (strain ATCC 49558 / DSM 4304 / JCM 9628 / NBRC 100126 / VC-16) protein is Methionine aminopeptidase.